Reading from the N-terminus, the 301-residue chain is Probable alpha-L-glutamate ligase 1 (301 aa).

The ATP-grasp domain occupies 104–287; the sequence is LQLLSRKGIG…VTEPIVEYIE (184 aa). ATP is bound by residues Lys141, 178–179, Asp187, and 211–213; these read EY and RSN. Mg(2+) contacts are provided by Asp248, Glu260, and Asn262. Residues Asp248, Glu260, and Asn262 each coordinate Mn(2+).

Belongs to the RimK family. Mg(2+) serves as cofactor. The cofactor is Mn(2+).

This Shewanella sp. (strain ANA-3) protein is Probable alpha-L-glutamate ligase 1.